The primary structure comprises 466 residues: 3-isopropylmalate dehydratase large subunit (466 aa).

[4Fe-4S] cluster contacts are provided by C347, C407, and C410.

It belongs to the aconitase/IPM isomerase family. LeuC type 1 subfamily. Heterodimer of LeuC and LeuD. The cofactor is [4Fe-4S] cluster.

The catalysed reaction is (2R,3S)-3-isopropylmalate = (2S)-2-isopropylmalate. It participates in amino-acid biosynthesis; L-leucine biosynthesis; L-leucine from 3-methyl-2-oxobutanoate: step 2/4. In terms of biological role, catalyzes the isomerization between 2-isopropylmalate and 3-isopropylmalate, via the formation of 2-isopropylmaleate. In Cronobacter sakazakii (strain ATCC BAA-894) (Enterobacter sakazakii), this protein is 3-isopropylmalate dehydratase large subunit.